A 527-amino-acid chain; its full sequence is Cytochrome P450 714B3 (527 aa).

Over 1 to 14 (MEVAMAMAVKVLLS) the chain is Lumenal. The helical; Signal-anchor for type III membrane protein transmembrane segment at 15-35 (LCCVGACGLAVYLYHILWLVP) threads the bilayer. Over 36–527 (QKVLAKFEDQ…SVCTKRGTAI (492 aa)) the chain is Cytoplasmic. C464 is a heme binding site.

It belongs to the cytochrome P450 family. It depends on heme as a cofactor.

It localises to the membrane. Its function is as follows. May be involved in gibberellin metabolism. This Zea mays (Maize) protein is Cytochrome P450 714B3 (CYP714B3).